Consider the following 70-residue polypeptide: Large ribosomal subunit protein bL31 (70 aa).

Residues Cys16, Cys18, Cys37, and Cys40 each coordinate Zn(2+).

Belongs to the bacterial ribosomal protein bL31 family. Type A subfamily. As to quaternary structure, part of the 50S ribosomal subunit. The cofactor is Zn(2+).

Its function is as follows. Binds the 23S rRNA. The protein is Large ribosomal subunit protein bL31 of Saccharophagus degradans (strain 2-40 / ATCC 43961 / DSM 17024).